A 182-amino-acid polypeptide reads, in one-letter code: Adenine phosphoribosyltransferase (182 aa).

The protein belongs to the purine/pyrimidine phosphoribosyltransferase family. As to quaternary structure, homodimer.

The protein localises to the cytoplasm. It carries out the reaction AMP + diphosphate = 5-phospho-alpha-D-ribose 1-diphosphate + adenine. The protein operates within purine metabolism; AMP biosynthesis via salvage pathway; AMP from adenine: step 1/1. Functionally, catalyzes a salvage reaction resulting in the formation of AMP, that is energically less costly than de novo synthesis. The protein is Adenine phosphoribosyltransferase of Ectopseudomonas mendocina (strain ymp) (Pseudomonas mendocina).